The chain runs to 774 residues: Pentatricopeptide repeat-containing protein At4g20770 (774 aa).

PPR repeat units lie at residues 5–39 (GNKY…GMKS), 40–70 (DTYL…MSVR), 71–101 (DVYS…MPER), 102–136 (DVVS…GFLP), 137–171 (SRFT…GLDK), 172–203 (NIFV…LSQP), 204–238 (NEVS…GVQV), 239–270 (DSVC…LGKQ), 283–313 (DLHL…MPEV), 314–348 (NVVS…GFQP), 349–379 (NEVT…IPQP), 380–414 (SVSA…NLKP), 415–449 (DKTT…EISK), 450–480 (NSHI…CINE), 482–516 (DIAC…AVLC), 518–552 (NETS…GYVS), 553–583 (DSFV…VLRK), 584–618 (NTVI…GEKP), 619–654 (DGIT…GIEP), and 655–685 (ELDH…TPYK). A type E motif region spans residues 690–765 (LWEILLSSCR…TPGQSWTTYG (76 aa)).

Belongs to the PPR family. PCMP-E subfamily.

The chain is Pentatricopeptide repeat-containing protein At4g20770 (PCMP-E35) from Arabidopsis thaliana (Mouse-ear cress).